Here is a 489-residue protein sequence, read N- to C-terminus: Amino acid transporter AVT6E (489 aa).

11 helical membrane-spanning segments follow: residues 76 to 96 (GIYGAVFNLTTSIIGAGIMAL), 102 to 122 (VLGLVLGFVLIILMALLSEIS), 156 to 176 (ICIIVNNGGVLVVYLIIMGDV), 201 to 221 (VLILIVMVIFLAPLCALNKID), 227 to 247 (SAASVALAVVFVVVCFVVATI), 269 to 289 (ILDLLVVIPIMSNAYVCHFNV), 310 to 330 (ITTAICVVVYASTAVSGYLLF), 357 to 377 (IVRIGYILHLVLVFPVIHFSL), 404 to 424 (VVLLALIYIGSTMIPNIWTAF), 425 to 445 (KFTGATSAVSLGFTFPALIAL), and 461 to 481 (VSWLMLILAVVVSIVGTIGNI).

It belongs to the amino acid/polyamine transporter 2 family. Amino acid/auxin permease (AAAP) (TC 2.A.18.6) subfamily.

The protein resides in the endoplasmic reticulum membrane. It localises to the vacuole membrane. The chain is Amino acid transporter AVT6E from Arabidopsis thaliana (Mouse-ear cress).